Here is a 142-residue protein sequence, read N- to C-terminus: uncharacterized protein (142 aa).

The next 3 helical transmembrane spans lie at 3 to 23 (LIFIAKMLQYSFLPFSPFNLL), 30 to 50 (SVSWFITYSVIVSIWGFAVWI), and 91 to 111 (FFLLYLFLTASNLIVQLAYFS).

It is found in the membrane. This is an uncharacterized protein from Saccharomyces cerevisiae (strain ATCC 204508 / S288c) (Baker's yeast).